Here is a 462-residue protein sequence, read N- to C-terminus: tRNA(Ile)-lysidine synthase (462 aa).

Position 26–31 (26–31 (SGGVDS)) interacts with ATP.

The protein belongs to the tRNA(Ile)-lysidine synthase family.

The protein localises to the cytoplasm. The catalysed reaction is cytidine(34) in tRNA(Ile2) + L-lysine + ATP = lysidine(34) in tRNA(Ile2) + AMP + diphosphate + H(+). Ligates lysine onto the cytidine present at position 34 of the AUA codon-specific tRNA(Ile) that contains the anticodon CAU, in an ATP-dependent manner. Cytidine is converted to lysidine, thus changing the amino acid specificity of the tRNA from methionine to isoleucine. This chain is tRNA(Ile)-lysidine synthase, found in Enterococcus faecalis (strain ATCC 700802 / V583).